The primary structure comprises 334 residues: MVGREKELSIHFVPGDCRLVEEEVNIPNRRVLITGATGLLGRAVYKEFQQNNWHAVGCGFRRARPKFEQVNLLDSNAVHHIIYDFQPHVIVHCAAERRPDVVENHPDAASQLNVDASGNLAKEAAAIGAFLIYISSDYVFDGTNPPYREEDIPNPLNLYGKTKLEGEKAVLENNLGAAVLRIPVLYGEVERLEESAVTIMFDKVQFSNKSANMDHWQQRFPTHVKDVATVCRQLAEKRMLDPSIKGTFHWSGNEQMTKYEMACAIADAFNLPSSHLRPITDSPVVGAQRPRNAQLDCSRLETLGIGQRTPFRIGIKESLWPFLIDKRWRQTVFH.

NADP(+)-binding positions include threonine 37 to leucine 40, phenylalanine 60 to arginine 62, asparagine 71 to leucine 72, cysteine 93, arginine 97, tyrosine 159, and leucine 185. At threonine 309 the chain carries Phosphothreonine. Residues leucine 319 to histidine 334 form a required for interaction with MAT2A region.

Belongs to the dTDP-4-dehydrorhamnose reductase family. MAT2B subfamily. Heterotrimer; composed of a catalytic MAT2A homodimer that binds one regulatory MAT2B chain. Heterohexamer; composed of a central, catalytic MAT2A homotetramer flanked on either side by a regulatory MAT2B chain. NADP binding increases the affinity for MAT2A.

It participates in amino-acid biosynthesis; S-adenosyl-L-methionine biosynthesis; S-adenosyl-L-methionine from L-methionine: step 1/1. Its function is as follows. Regulatory subunit of S-adenosylmethionine synthetase 2, an enzyme that catalyzes the formation of S-adenosylmethionine from methionine and ATP. Regulates MAT2A catalytic activity by changing its kinetic properties, increasing its affinity for L-methionine. Can bind NADP (in vitro). This is Methionine adenosyltransferase 2 subunit beta (MAT2B) from Bos taurus (Bovine).